Here is a 139-residue protein sequence, read N- to C-terminus: uncharacterized protein (139 aa).

This sequence to E.coli YebE.

This is an uncharacterized protein from Yersinia enterocolitica.